The sequence spans 78 residues: DNA-directed RNA polymerase subunit omega (78 aa).

Belongs to the RNA polymerase subunit omega family. In terms of assembly, in cyanobacteria the RNAP catalytic core is composed of 2 alpha, 1 beta, 1 beta', 1 gamma and 1 omega subunit. When a sigma factor is associated with the core the holoenzyme is formed, which can initiate transcription.

The catalysed reaction is RNA(n) + a ribonucleoside 5'-triphosphate = RNA(n+1) + diphosphate. Promotes RNA polymerase assembly. Latches the N- and C-terminal regions of the beta' subunit thereby facilitating its interaction with the beta and alpha subunits. In Prochlorococcus marinus subsp. pastoris (strain CCMP1986 / NIES-2087 / MED4), this protein is DNA-directed RNA polymerase subunit omega.